Here is a 174-residue protein sequence, read N- to C-terminus: Guided entry of tail-anchored proteins factor 1 (174 aa).

At 1–8 the chain is on the lumenal side; sequence MSSAAADH. A helical transmembrane segment spans residues 9 to 29; the sequence is WAWLLVLSFVFGCNVLRILLP. Topologically, residues 30-99 are cytoplasmic; that stretch reads SFSSFMSRVL…VKARTAQLAK (70 aa). Residues 39 to 94 adopt a coiled-coil conformation; that stretch reads LQKDAEQESQMRAEIQDMKQELSTVNMMDEFARYARLERKINKMTDKLKTHVKART. The tract at residues 39 to 97 is interaction with GET3/TRC40; it reads LQKDAEQESQMRAEIQDMKQELSTVNMMDEFARYARLERKINKMTDKLKTHVKARTAQL. Residues 100 to 120 form a helical membrane-spanning segment; sequence IKWVISVAFYVLQAALMISLI. Residues 121 to 148 lie on the Lumenal side of the membrane; that stretch reads WKYYSVPVAVVPSKWITPLDRLVAFPTR. The chain crosses the membrane as a helical span at residues 149–169; the sequence is VAGGVGITCWILVCNKVVAIV. Residues 170–174 are Cytoplasmic-facing; it reads LHPFS.

It belongs to the WRB/GET1 family. As to quaternary structure, component of the Golgi to ER traffic (GET) complex, which is composed of GET1/WRB, CAMLG/GET2 and GET3/TRC40. Within the complex, GET1 and CAMLG form a heterotetramer which is stabilized by phosphatidylinositol binding and which binds to the GET3 homodimer. Interacts with CAMLG (via C-terminus). GET3 shows a higher affinity for CAMLG than for GET1.

The protein localises to the endoplasmic reticulum membrane. Its function is as follows. Required for the post-translational delivery of tail-anchored (TA) proteins to the endoplasmic reticulum (ER). Together with CAMLG/GET2, acts as a membrane receptor for soluble GET3/TRC40, which recognizes and selectively binds the transmembrane domain of TA proteins in the cytosol. Required to ensure correct topology and ER insertion of CAMLG. The chain is Guided entry of tail-anchored proteins factor 1 from Homo sapiens (Human).